The chain runs to 454 residues: MFAMKRREFIAASAAVAASSLLPQTPAWARGRKVRLAMIGTGMRGLVLLKELVRRDDVEVVALCDIEPIMLGRAMDMVAKAGKPAPKTYGQDRDTHAWKRLLEQKGIDGVIIATPWEYHAPMAIAAMQAGVAVGCEVVAGITLQDHWDVLKTQLSTGTPYMLLENVCYRRDVMAALQMVRQGLFGELVHLQAGYQHDLRGVKFNSGDPNQPYDSGVEFGPKGWSEARWRTEHSVERNGELYPSHGIGPCAMYTGINRGNRFTHINAFATKARGLHEYTVAKSGGTTHPSTKVKFKLGDIVTTTLACENGETILLQHDTSLPRPYSMGFRVQGTKGLWMDVNHSIHIEGRSPPHQWEEFKKYQDEYEHPLWKQNADTAASAGHGGMDWFVIHAFVEALKAKAPMPIDIYDAVTWSAITPLSEQSIANSFQTLEFPDFTAGAWKQRKPIFAFDGKY.

The segment at residues 1-29 (MFAMKRREFIAASAAVAASSLLPQTPAWA) is a signal peptide (tat-type signal). Residues 43 to 44 (MR), Asp-65, 116 to 119 (WEYH), 136 to 137 (EV), and Asn-165 contribute to the NAD(+) site. A substrate-binding site is contributed by Tyr-194. Position 224–228 (224–228 (SEARW)) interacts with NAD(+). Substrate-binding positions include Arg-229, 241 to 244 (YPSH), and Tyr-324. Tyr-241 contacts NAD(+).

It belongs to the Gfo/Idh/MocA family. Glycosyl hydrolase 109 subfamily. NAD(+) is required as a cofactor. In terms of processing, predicted to be exported by the Tat system. The position of the signal peptide cleavage has not been experimentally proven.

Its function is as follows. Glycosidase. The protein is Glycosyl hydrolase family 109 protein of Stenotrophomonas maltophilia (strain K279a).